The sequence spans 200 residues: Guanylyl cyclase-activating protein 2 (200 aa).

Residue G2 is the site of N-myristoyl glycine attachment. 4 consecutive EF-hand domains span residues 14 to 31 (GEID…FVME), 53 to 88 (EASQ…VLRG), 89 to 124 (TLEH…IYQL), and 141 to 176 (TPEE…DKWV). Ca(2+) is bound by residues D66, N68, D70, T72, E77, D102, D104, N106, C108, E113, D154, N156, D158, Q160, and E165.

In terms of processing, the N-terminus is blocked. As to expression, in the retina, it is expressed in cone and rod photoreceptor cells.

The protein resides in the cell membrane. Its subcellular location is the photoreceptor inner segment. The protein localises to the cell projection. It localises to the cilium. It is found in the photoreceptor outer segment. Functionally, stimulates two retinal guanylyl cyclases (GCs) GUCY2D and GUCY2F when free calcium ions concentration is low, and inhibits GUCY2D and GUCY2F when free calcium ions concentration is elevated. This Ca(2+)-sensitive regulation of GCs is a key event in recovery of the dark state of rod photoreceptors following light exposure. May be involved in cone photoreceptor response and recovery of response in bright light. This is Guanylyl cyclase-activating protein 2 (GUCA1B) from Homo sapiens (Human).